The following is a 155-amino-acid chain: Aspartate carbamoyltransferase regulatory chain (155 aa).

Zn(2+)-binding residues include Cys-110, Cys-115, Cys-139, and Cys-142.

This sequence belongs to the PyrI family. In terms of assembly, contains catalytic and regulatory chains. It depends on Zn(2+) as a cofactor.

Its function is as follows. Involved in allosteric regulation of aspartate carbamoyltransferase. The protein is Aspartate carbamoyltransferase regulatory chain of Yersinia pestis bv. Antiqua (strain Antiqua).